A 92-amino-acid polypeptide reads, in one-letter code: MMSTKGITLFLCLLLLALATSVNGGQGTRRSRMTRALHGGRPSARYDAPYCSEEELQACDCSHNPVRDACLCQYDPAGSPACECFCVEPWRR.

The N-terminal stretch at 1–24 (MMSTKGITLFLCLLLLALATSVNG) is a signal peptide. The propeptide occupies 25 to 44 (GQGTRRSRMTRALHGGRPSA).

Contains 4 disulfide bonds. Expressed by the venom duct.

It localises to the secreted. Functionally, probable neurotoxin with unknown target. Possibly targets ion channels. In Californiconus californicus (California cone), this protein is Conotoxin Cal22f.